We begin with the raw amino-acid sequence, 357 residues long: Glutamine synthetase (357 aa).

The GS beta-grasp domain occupies 25–104; it reads VMAEYIWIDA…VLCETWDSDG (80 aa). One can recognise a GS catalytic domain in the interval 111–357; sequence YRHDCARLME…IIAETLCGGL (247 aa).

It belongs to the glutamine synthetase family. Homooctamer.

The protein resides in the cytoplasm. It carries out the reaction L-glutamate + NH4(+) + ATP = L-glutamine + ADP + phosphate + H(+). In Emericella nidulans (strain FGSC A4 / ATCC 38163 / CBS 112.46 / NRRL 194 / M139) (Aspergillus nidulans), this protein is Glutamine synthetase (glnA).